Reading from the N-terminus, the 416-residue chain is Trehalose synthase (416 aa).

The protein belongs to the glycosyltransferase group 1 family. Glycosyltransferase 4 subfamily. Homodimer. The cofactor is Mg(2+).

The catalysed reaction is an NDP-alpha-D-glucose + D-glucose = alpha,alpha-trehalose + a ribonucleoside 5'-diphosphate + H(+). Inhibited by 20 mM Fe(3+) and Mn(2+). Partially inhibited by Zn(2+) and Ni(2+). Activity is slightly enhanced by 2 mM Fe (3+), Mn (2+), Ca(2+) or Li(+) and by 20 mM Mg(2+), Ca(2+) or Li(+). Synthesizes trehalose from ADP-glucose and glucose. The reaction is reversible, the equilibrium strongly favors trehalose synthesis. The polypeptide is Trehalose synthase (Rubrobacter xylanophilus (strain DSM 9941 / JCM 11954 / NBRC 16129 / PRD-1)).